The primary structure comprises 136 residues: Protein NrdI (136 aa).

The protein belongs to the NrdI family.

Functionally, probably involved in ribonucleotide reductase function. In Citrobacter koseri (strain ATCC BAA-895 / CDC 4225-83 / SGSC4696), this protein is Protein NrdI.